We begin with the raw amino-acid sequence, 286 residues long: Interferon-induced 35 kDa protein homolog (286 aa).

Positions L5–L26 are leucine-zipper. 2 consecutive NID domains span residues A81–E170 and F183–E266.

This sequence belongs to the NMI family. In terms of assembly, homodimer. Also interacts with B-ATF. Interacts with TRIM21. Interacts (via NID domains) with NMI (via NID domains); the interaction is direct and is facilitated by TRIM21. Post-translationally, phosphorylated. Dephosphorylation correlates with the formation of a complex with NMI.

The protein localises to the cytoplasm. It localises to the nucleus. The protein resides in the secreted. Functionally, acts as a signaling pathway regulator involved in innate immune system response. In response to interferon IFN-alpha, associates in a complex with transcriptional regulator NMI to regulate immune response; the complex formation prevents proteasome-mediated degradation of IFI35 and correlates with IFI35 dephosphorylation. In complex with NMI, inhibits virus-triggered type I interferon/IFN-beta production. In complex with NMI, negatively regulates nuclear factor NF-kappa-B signaling by inhibiting the nuclear translocation, activation and transcription of the NF-kappa-B subunit p65/RELA, resulting in the inhibition of endothelial cell proliferation, migration and re-endothelialization of injured arteries. Beside its role as an intracellular signaling pathway regulator, also functions extracellularly as damage-associated molecular patterns (DAMPs) to promote inflammation when actively released by macrophage to the extracellular space during cell injury and pathogen invasion. Macrophage-secreted IFI35 activates NF-kappa-B signaling in adjacent macrophages through Toll-like receptor 4/TLR4 activation, thereby inducing NF-kappa-B translocation from the cytoplasm into the nucleus which promotes the release of pro-inflammatory cytokines. The sequence is that of Interferon-induced 35 kDa protein homolog from Mus musculus (Mouse).